The following is an 874-amino-acid chain: Protein translocase subunit SecA (874 aa).

ATP-binding positions include glutamine 87, 105 to 109, and aspartate 512; that span reads GEGKT. 4 residues coordinate Zn(2+): cysteine 859, cysteine 861, cysteine 870, and histidine 871.

This sequence belongs to the SecA family. As to quaternary structure, monomer and homodimer. Part of the essential Sec protein translocation apparatus which comprises SecA, SecYEG and auxiliary proteins SecDF-YajC and YidC. Zn(2+) is required as a cofactor.

It is found in the cell inner membrane. The protein localises to the cytoplasm. The catalysed reaction is ATP + H2O + cellular proteinSide 1 = ADP + phosphate + cellular proteinSide 2.. Functionally, part of the Sec protein translocase complex. Interacts with the SecYEG preprotein conducting channel. Has a central role in coupling the hydrolysis of ATP to the transfer of proteins into and across the cell membrane, serving both as a receptor for the preprotein-SecB complex and as an ATP-driven molecular motor driving the stepwise translocation of polypeptide chains across the membrane. The chain is Protein translocase subunit SecA from Buchnera aphidicola subsp. Schizaphis graminum (strain Sg).